Here is a 576-residue protein sequence, read N- to C-terminus: Aspartate--tRNA ligase (576 aa).

Glu173 serves as a coordination point for L-aspartate. The segment at Gln197–Lys200 is aspartate. Arg219 serves as a coordination point for L-aspartate. ATP contacts are provided by residues Arg219–Glu221 and Gln228. His438 serves as a coordination point for L-aspartate. Residue Glu470 coordinates ATP. Arg477 contributes to the L-aspartate binding site. Gly522 to Arg525 lines the ATP pocket.

This sequence belongs to the class-II aminoacyl-tRNA synthetase family. Type 1 subfamily. Homodimer.

The protein resides in the cytoplasm. The enzyme catalyses tRNA(Asp) + L-aspartate + ATP = L-aspartyl-tRNA(Asp) + AMP + diphosphate. Catalyzes the attachment of L-aspartate to tRNA(Asp) in a two-step reaction: L-aspartate is first activated by ATP to form Asp-AMP and then transferred to the acceptor end of tRNA(Asp). This is Aspartate--tRNA ligase from Aster yellows witches'-broom phytoplasma (strain AYWB).